We begin with the raw amino-acid sequence, 250 residues long: Acetylglutamate kinase (250 aa).

Substrate-binding positions include 41–42 (GG), Arg-63, and Asn-156.

This sequence belongs to the acetylglutamate kinase family. ArgB subfamily.

The protein resides in the cytoplasm. It carries out the reaction N-acetyl-L-glutamate + ATP = N-acetyl-L-glutamyl 5-phosphate + ADP. It participates in amino-acid biosynthesis; L-arginine biosynthesis; N(2)-acetyl-L-ornithine from L-glutamate: step 2/4. Functionally, catalyzes the ATP-dependent phosphorylation of N-acetyl-L-glutamate. In Listeria monocytogenes serotype 4b (strain CLIP80459), this protein is Acetylglutamate kinase.